Consider the following 357-residue polypeptide: MFSSRHILSNVRPIIKNLDLTRGFSDRKTKYFDLNDLIKTVNVTYKTGVNLEETTTVESKYVDVTPSSNTKGTVVTLSGSPGTHNDFKYMKSFFEQKKIRLICTNYPGSEFVTGGLHNSYTNQDRNSYMKSLMETLELKNVNRLIIMGHSRGGENALQLTSMLSNDENWPLVGAVMINSPGFAPHKGISKRMGTINFIISLIKRHNKTINSILHPILHYFYNNLIGLRVSHGKVAAAAILPMQTFAFDEQKLSIDDLRAKPGIRAFYGYGSKDFLIDEHQSEEVAMYFSEEDHYVISNKQDAEKAIKEARKSFTTGKQFVTANFKEEGHFLQKTYPEFIVEVVDSIFDADKEVDTKI.

This is an uncharacterized protein from Caenorhabditis elegans.